Consider the following 207-residue polypeptide: Large ribosomal subunit protein uL4 (207 aa).

Positions 57 to 78 (VAGGGKKPWRQKGTGRARHGSI) are disordered. Positions 63–77 (KPWRQKGTGRARHGS) are enriched in basic residues.

Belongs to the universal ribosomal protein uL4 family. In terms of assembly, part of the 50S ribosomal subunit.

Its function is as follows. One of the primary rRNA binding proteins, this protein initially binds near the 5'-end of the 23S rRNA. It is important during the early stages of 50S assembly. It makes multiple contacts with different domains of the 23S rRNA in the assembled 50S subunit and ribosome. Forms part of the polypeptide exit tunnel. The protein is Large ribosomal subunit protein uL4 of Onion yellows phytoplasma (strain OY-M).